A 618-amino-acid chain; its full sequence is MKQSKLLIPTLREMPSDAQVISHALMVRAGYVRQVSAGIYAYLPLANRTIEKFKTIMREEFEKIGAVEMLAPALLTADLWRESGRYETYGEDLYKLKNRDNSDFILGPTHEETFTTLVRDAVKSYKQLPLNLYQIQSKYRDEKRPRNGLLRTREFIMKDGYSFHHNYEDLDVTYEDYRQAYEAIFTRAGLDFKGIIGDGGAMGGKDSQEFMAITPARTDLDRWVVLDKSIASMDDIPKEVLEEIKAELAAWMISGEDTIAYSTESSYAANLEMATNEYKPSSKVAAEDALAEVETPHCKTIDEVAAFLSVDETQTIKTLLFVADNEPVVALLVGNDHINTVKLKNYLAADFLEPASEEEARAFFGAGFGSLGPVNLAQGSRIVADRKVQNLTNAVAGANKDGFHVTGVNPGRDFQAEYVDIREVKEGEMSPDGHGVLQFARGIEVGHIFKLGTRYSDSMGATILDENGRAVPIVMGCYGIGVSRILSAVIEQHARLFVNKTPKGDYRYAWGVNFPKELAPFDVHLITVNVKDQVAQDLTAKLEADLTAKGYDVLTDDRNERVGSKFSDSDLIGLPIRVTVGKKAAEGIVEIKIKATGASIEVNAENLIETLEILTKEH.

This sequence belongs to the class-II aminoacyl-tRNA synthetase family. ProS type 1 subfamily. Homodimer.

Its subcellular location is the cytoplasm. It carries out the reaction tRNA(Pro) + L-proline + ATP = L-prolyl-tRNA(Pro) + AMP + diphosphate. Functionally, catalyzes the attachment of proline to tRNA(Pro) in a two-step reaction: proline is first activated by ATP to form Pro-AMP and then transferred to the acceptor end of tRNA(Pro). As ProRS can inadvertently accommodate and process non-cognate amino acids such as alanine and cysteine, to avoid such errors it has two additional distinct editing activities against alanine. One activity is designated as 'pretransfer' editing and involves the tRNA(Pro)-independent hydrolysis of activated Ala-AMP. The other activity is designated 'posttransfer' editing and involves deacylation of mischarged Ala-tRNA(Pro). The misacylated Cys-tRNA(Pro) is not edited by ProRS. This chain is Proline--tRNA ligase, found in Streptococcus pyogenes serotype M12 (strain MGAS2096).